Here is a 124-residue protein sequence, read N- to C-terminus: MEDQEMQLKVKRVTDKFTESMYVLANEPSIALYRLQEHVRRSLPELVQHKTDMQSWEEQSQGAIYTVEYACSAVKSMTNSSLYFKNIDGLLRQAISLKEQISSSQGRSAVINPNETPAHTSVTP.

The interval 102 to 124 (SSSQGRSAVINPNETPAHTSVTP) is disordered.

This sequence belongs to the BORCS8 family.

Its subcellular location is the lysosome membrane. Functionally, as part of a BORC-like complex, it may play a role in the movement and localization of lysosomes at the cell periphery. Associated with the cytosolic face of lysosomes, this complex may couple lysosomes to microtubule plus-end-directed kinesin motors, driving lysosome movement toward the cell periphery. This Danio rerio (Zebrafish) protein is BLOC-1-related complex subunit 8.